Consider the following 305-residue polypeptide: UDP-3-O-acyl-N-acetylglucosamine deacetylase (305 aa).

Zn(2+)-binding residues include H79, H238, and D242. Catalysis depends on H265, which acts as the Proton donor.

This sequence belongs to the LpxC family. Zn(2+) serves as cofactor.

It catalyses the reaction a UDP-3-O-[(3R)-3-hydroxyacyl]-N-acetyl-alpha-D-glucosamine + H2O = a UDP-3-O-[(3R)-3-hydroxyacyl]-alpha-D-glucosamine + acetate. Its pathway is glycolipid biosynthesis; lipid IV(A) biosynthesis; lipid IV(A) from (3R)-3-hydroxytetradecanoyl-[acyl-carrier-protein] and UDP-N-acetyl-alpha-D-glucosamine: step 2/6. Functionally, catalyzes the hydrolysis of UDP-3-O-myristoyl-N-acetylglucosamine to form UDP-3-O-myristoylglucosamine and acetate, the committed step in lipid A biosynthesis. This Vibrio parahaemolyticus serotype O3:K6 (strain RIMD 2210633) protein is UDP-3-O-acyl-N-acetylglucosamine deacetylase.